Here is a 145-residue protein sequence, read N- to C-terminus: Phospholipase A2, membrane associated (145 aa).

Residues Met1–Gly20 form the signal peptide. Intrachain disulfides connect Cys46–Cys138, Cys48–Cys64, Cys63–Cys118, Cys69–Cys145, Cys70–Cys111, Cys79–Cys104, and Cys97–Cys109. The Ca(2+) site is built by His47, Gly49, and Gly51. His67 is an active-site residue. Residue Asp68 participates in Ca(2+) binding. Asp112 is an active-site residue.

The protein belongs to the phospholipase A2 family. It depends on Ca(2+) as a cofactor. In terms of tissue distribution, alveolar macrophages, and at much lower levels in peripheral blood monocytes and peritoneal macrophages.

The protein resides in the secreted. It localises to the cell membrane. It is found in the mitochondrion outer membrane. The enzyme catalyses a 1,2-diacyl-sn-glycero-3-phosphoethanolamine + H2O = a 1-acyl-sn-glycero-3-phosphoethanolamine + a fatty acid + H(+). The catalysed reaction is 1-hexadecanoyl-2-(9Z-octadecenoyl)-sn-glycero-3-phosphoethanolamine + H2O = 1-hexadecanoyl-sn-glycero-3-phosphoethanolamine + (9Z)-octadecenoate + H(+). It catalyses the reaction 1-hexadecanoyl-2-(9Z,12Z-octadecadienoyl)-sn-glycero-3-phosphoethanolamine + H2O = 1-hexadecanoyl-sn-glycero-3-phosphoethanolamine + (9Z,12Z)-octadecadienoate + H(+). It carries out the reaction 1-hexadecanoyl-2-(5Z,8Z,11Z,14Z-eicosatetraenoyl)-sn-glycero-3-phosphoethanolamine + H2O = 1-hexadecanoyl-sn-glycero-3-phosphoethanolamine + (5Z,8Z,11Z,14Z)-eicosatetraenoate + H(+). The enzyme catalyses N-hexadecanoyl-1,2-di-(9Z-octadecenoyl)-sn-glycero-3-phosphoethanolamine + H2O = N-hexadecanoyl-1-(9Z-octadecenoyl)-sn-glycero-3-phosphoethanolamine + (9Z)-octadecenoate + H(+). The catalysed reaction is 1,2-dihexadecanoyl-sn-glycero-3-phospho-(1'-sn-glycerol) + H2O = 1-hexadecanoyl-sn-glycero-3-phospho-(1'-sn-glycerol) + hexadecanoate + H(+). It catalyses the reaction 1-hexadecanoyl-2-(9Z-octadecenoyl)-sn-glycero-3-phosphoglycerol + H2O = 1-hexadecanoyl-sn-glycero-3-phosphoglycerol + (9Z)-octadecenoate + H(+). It carries out the reaction 1-hexadecanoyl-2-(9Z-octadecenoyl)-sn-glycero-3-phospho-(1'-sn-glycerol) + H2O = 1-hexadecanoyl-sn-glycero-3-phospho-(1'-sn-glycerol) + (9Z)-octadecenoate + H(+). The enzyme catalyses a 1,2-diacyl-sn-glycero-3-phosphocholine + H2O = a 1-acyl-sn-glycero-3-phosphocholine + a fatty acid + H(+). The catalysed reaction is 1,2-dihexadecanoyl-sn-glycero-3-phosphocholine + H2O = 1-hexadecanoyl-sn-glycero-3-phosphocholine + hexadecanoate + H(+). It catalyses the reaction 1-hexadecanoyl-2-(9Z-octadecenoyl)-sn-glycero-3-phosphocholine + H2O = 1-hexadecanoyl-sn-glycero-3-phosphocholine + (9Z)-octadecenoate + H(+). It carries out the reaction 1-hexadecanoyl-2-(9Z,12Z-octadecadienoyl)-sn-glycero-3-phosphocholine + H2O = (9Z,12Z)-octadecadienoate + 1-hexadecanoyl-sn-glycero-3-phosphocholine + H(+). The enzyme catalyses 1-hexadecanoyl-2-(4Z,7Z,10Z,13Z,16Z,19Z-docosahexaenoyl)-sn-glycero-3-phosphocholine + H2O = (4Z,7Z,10Z,13Z,16Z,19Z)-docosahexaenoate + 1-hexadecanoyl-sn-glycero-3-phosphocholine + H(+). In terms of biological role, secretory calcium-dependent phospholipase A2 that primarily targets extracellular phospholipids with implications in host antimicrobial defense, inflammatory response and tissue regeneration. Hydrolyzes the ester bond of the fatty acyl group attached at sn-2 position of phospholipids (phospholipase A2 activity) with preference for phosphatidylethanolamines and phosphatidylglycerols over phosphatidylcholines. Contributes to lipid remodeling of cellular membranes and generation of lipid mediators involved in pathogen clearance. Displays bactericidal activity against Gram-positive bacteria by directly hydrolyzing phospholipids of the bacterial membrane. Upon sterile inflammation, targets membrane phospholipids of extracellular mitochondria released from activated platelets, generating free unsaturated fatty acids such as arachidonate that is used by neighboring leukocytes to synthesize inflammatory eicosanoids such as leukotrienes. Simultaneously, by compromising mitochondrial membrane integrity, promotes the release in circulation of potent damage-associated molecular pattern molecules that activate the innate immune response. Plays a stem cell regulator role in the intestinal crypt. Within intracellular compartment mediates Paneth cell differentiation and its stem cell supporting functions by inhibiting Wnt signaling pathway in intestinal stem cell (ICS). Secreted in the intestinal lumen upon inflammation, acts in an autocrine way and promotes prostaglandin E2 synthesis that stimulates Wnt signaling pathway in ICS cells and tissue regeneration. May play a role in the biosynthesis of N-acyl ethanolamines that regulate energy metabolism and inflammation. Hydrolyzes N-acyl phosphatidylethanolamines to N-acyl lysophosphatidylethanolamines, which are further cleaved by a lysophospholipase D to release N-acyl ethanolamines. Independent of its catalytic activity, acts as a ligand for integrins. Binds to and activates integrins ITGAV:ITGB3, ITGA4:ITGB1 and ITGA5:ITGB1. Binds to a site (site 2) which is distinct from the classical ligand-binding site (site 1) and induces integrin conformational changes and enhanced ligand binding to site 1. Induces cell proliferation in an integrin-dependent manner. This chain is Phospholipase A2, membrane associated (PLA2G2A), found in Cavia porcellus (Guinea pig).